A 335-amino-acid polypeptide reads, in one-letter code: Dihydroorotate dehydrogenase (quinone) (335 aa).

Residues 59 to 63 (AGADK) and Thr-83 each bind FMN. Lys-63 provides a ligand contact to substrate. 108 to 112 (NRNGF) lines the substrate pocket. Residues Asn-136 and Asn-169 each coordinate FMN. A substrate-binding site is contributed by Asn-169. Ser-172 functions as the Nucleophile in the catalytic mechanism. Asn-174 contributes to the substrate binding site. FMN is bound by residues Lys-214 and Gly-242. 243 to 244 (NT) contributes to the substrate binding site. FMN-binding positions include Gly-265, Gly-294, and 315 to 316 (YS).

This sequence belongs to the dihydroorotate dehydrogenase family. Type 2 subfamily. Monomer. FMN serves as cofactor.

Its subcellular location is the cell membrane. It carries out the reaction (S)-dihydroorotate + a quinone = orotate + a quinol. The protein operates within pyrimidine metabolism; UMP biosynthesis via de novo pathway; orotate from (S)-dihydroorotate (quinone route): step 1/1. Its function is as follows. Catalyzes the conversion of dihydroorotate to orotate with quinone as electron acceptor. The polypeptide is Dihydroorotate dehydrogenase (quinone) (Glaesserella parasuis serovar 5 (strain SH0165) (Haemophilus parasuis)).